The primary structure comprises 355 residues: Putative beta-lactamase HcpE (355 aa).

Positions 1-22 are cleaved as a signal peptide; sequence MGVKFLKILVCGLFFWSLNAHL. TPR repeat units follow at residues 27–60, 63–96, 98–131, 132–166, 202–240, 245–275, 276–311, and 312–344; these read DNSF…GVSE, TQLG…DDRE, CFGL…LKHP, ESCY…DMAK, GQAC…NNSG, LGSM…MGSA, VSCS…MGDE, and VGCF…GMKQ. Disulfide bonds link Cys54–Cys62, Cys90–Cys98, Cys126–Cys134, Cys160–Cys168, Cys197–Cys205, Cys234–Cys242, Cys270–Cys278, Cys306–Cys314, and Cys338–Cys346.

Belongs to the hcp beta-lactamase family.

The protein localises to the secreted. It carries out the reaction a beta-lactam + H2O = a substituted beta-amino acid. Its function is as follows. May hydrolyze 6-aminopenicillinic acid and 7-aminocephalosporanic acid (ACA) derivatives. In Helicobacter pylori (strain ATCC 700392 / 26695) (Campylobacter pylori), this protein is Putative beta-lactamase HcpE (hcpE).